We begin with the raw amino-acid sequence, 95 residues long: Small ribosomal subunit protein bS6 (95 aa).

The protein belongs to the bacterial ribosomal protein bS6 family.

Its function is as follows. Binds together with bS18 to 16S ribosomal RNA. In Corynebacterium efficiens (strain DSM 44549 / YS-314 / AJ 12310 / JCM 11189 / NBRC 100395), this protein is Small ribosomal subunit protein bS6.